Consider the following 300-residue polypeptide: Nicotinate-nucleotide pyrophosphorylase [carboxylating] (300 aa).

Residues 5–9 form an important for hexamer formation region; it reads QLLPK. Quinolinate is bound by residues Arg-107, 150–151, 172–173, Lys-183, Glu-213, Asp-234, 260–262, and Gly-282; these read RK, HR, and SGG.

This sequence belongs to the NadC/ModD family. Hexamer formed by 3 homodimers.

It catalyses the reaction nicotinate beta-D-ribonucleotide + CO2 + diphosphate = quinolinate + 5-phospho-alpha-D-ribose 1-diphosphate + 2 H(+). It functions in the pathway cofactor biosynthesis; NAD(+) biosynthesis; nicotinate D-ribonucleotide from quinolinate: step 1/1. Functionally, involved in the catabolism of quinolinic acid (QA). The chain is Nicotinate-nucleotide pyrophosphorylase [carboxylating] (qprt) from Dictyostelium discoideum (Social amoeba).